The sequence spans 78 residues: Translation initiation factor IF-1 (78 aa).

The region spanning 2–78 is the S1-like domain; the sequence is SKNNLNETES…TQARITYRFK (77 aa).

This sequence belongs to the IF-1 family. In terms of assembly, component of the 30S ribosomal translation pre-initiation complex which assembles on the 30S ribosome in the order IF-2 and IF-3, IF-1 and N-formylmethionyl-tRNA(fMet); mRNA recruitment can occur at any time during PIC assembly.

It localises to the cytoplasm. One of the essential components for the initiation of protein synthesis. Stabilizes the binding of IF-2 and IF-3 on the 30S subunit to which N-formylmethionyl-tRNA(fMet) subsequently binds. Helps modulate mRNA selection, yielding the 30S pre-initiation complex (PIC). Upon addition of the 50S ribosomal subunit IF-1, IF-2 and IF-3 are released leaving the mature 70S translation initiation complex. The polypeptide is Translation initiation factor IF-1 (Aster yellows witches'-broom phytoplasma (strain AYWB)).